The following is a 432-amino-acid chain: Trigger factor (432 aa).

Positions 163-248 constitute a PPIase FKBP-type domain; that stretch reads GDVVVLDFAA…VHAVKERRLP (86 aa).

Belongs to the FKBP-type PPIase family. Tig subfamily.

The protein localises to the cytoplasm. The catalysed reaction is [protein]-peptidylproline (omega=180) = [protein]-peptidylproline (omega=0). Its function is as follows. Involved in protein export. Acts as a chaperone by maintaining the newly synthesized protein in an open conformation. Functions as a peptidyl-prolyl cis-trans isomerase. The sequence is that of Trigger factor from Nitratidesulfovibrio vulgaris (strain DSM 19637 / Miyazaki F) (Desulfovibrio vulgaris).